A 458-amino-acid chain; its full sequence is MPPKEAQASQKLFGTDGVRGKANVYPMTAEVAMQLGRALAFLIRNGPHRHRVIVGKDTRLSGYMLEQALASGLTSMGVDVELVGPLPTPGISNITTSMRADAGAVISASHNPYEDNGIKFFWRDGFKLPDETEGKIEELVSSGSIDSIRPTATKIGRAFRMEDARGRYIVFLKATFPRELTLEGMTIVVDCANGAAYKTAPAVLEELGAKVIALGVSPDGKNINHKCGALYPENLAKTVVKHGAHLGIALDGDADRLIVVDEKGKVVDGDAIMAICTGELVARKQLKKKMLVSTVMSNIGLERAVARWGVKVARTRVGDRYVVDEMRRNGYNLGGEQSGHLIFLDHTTTGDGTLAALQLLAVMCRAGKPLSELASIFEPVPQTLVNVVVKQKKELGELPTVMKVIKSVEQRLGNTGRVLVRFSGTEPKARVLIEGEDAARNQAYAKEIADALSKALSV.

Serine 109 serves as the catalytic Phosphoserine intermediate. Mg(2+) is bound by residues serine 109, aspartate 251, aspartate 253, and aspartate 255. Serine 109 is modified (phosphoserine).

The protein belongs to the phosphohexose mutase family. Mg(2+) serves as cofactor. Post-translationally, activated by phosphorylation.

The catalysed reaction is alpha-D-glucosamine 1-phosphate = D-glucosamine 6-phosphate. In terms of biological role, catalyzes the conversion of glucosamine-6-phosphate to glucosamine-1-phosphate. The polypeptide is Phosphoglucosamine mutase (Myxococcus xanthus (strain DK1622)).